The chain runs to 113 residues: MHILDKVDAAQLRDDIPEFRAGDTLDVHVKVIEGSKSRLQVFRGVVIRRQNSGIRETFTIRKVSFGIGVERTFPVHSPNIDRIDVLSRGKVRRAKLYYLRERRGKAARIKERI.

This sequence belongs to the bacterial ribosomal protein bL19 family.

This protein is located at the 30S-50S ribosomal subunit interface and may play a role in the structure and function of the aminoacyl-tRNA binding site. The protein is Large ribosomal subunit protein bL19 of Corynebacterium jeikeium (strain K411).